Consider the following 476-residue polypeptide: Aspartyl/glutamyl-tRNA(Asn/Gln) amidotransferase subunit B (476 aa).

Belongs to the GatB/GatE family. GatB subfamily. Heterotrimer of A, B and C subunits.

It catalyses the reaction L-glutamyl-tRNA(Gln) + L-glutamine + ATP + H2O = L-glutaminyl-tRNA(Gln) + L-glutamate + ADP + phosphate + H(+). The enzyme catalyses L-aspartyl-tRNA(Asn) + L-glutamine + ATP + H2O = L-asparaginyl-tRNA(Asn) + L-glutamate + ADP + phosphate + 2 H(+). Allows the formation of correctly charged Asn-tRNA(Asn) or Gln-tRNA(Gln) through the transamidation of misacylated Asp-tRNA(Asn) or Glu-tRNA(Gln) in organisms which lack either or both of asparaginyl-tRNA or glutaminyl-tRNA synthetases. The reaction takes place in the presence of glutamine and ATP through an activated phospho-Asp-tRNA(Asn) or phospho-Glu-tRNA(Gln). The protein is Aspartyl/glutamyl-tRNA(Asn/Gln) amidotransferase subunit B of Bacillus pumilus (strain SAFR-032).